Here is a 117-residue protein sequence, read N- to C-terminus: Large ribosomal subunit protein bL20 (117 aa).

This sequence belongs to the bacterial ribosomal protein bL20 family.

In terms of biological role, binds directly to 23S ribosomal RNA and is necessary for the in vitro assembly process of the 50S ribosomal subunit. It is not involved in the protein synthesizing functions of that subunit. This chain is Large ribosomal subunit protein bL20, found in Rickettsia peacockii (strain Rustic).